The following is a 64-amino-acid chain: Cold shock protein CapA (64 aa).

Residues 7 to 64 (GTVKWFNDEKGFGFITPQGGGDDLFVHFKAIESDGFKSLKEGQTVSFVAEKGQKGMQA) form the CSD domain.

The protein resides in the cytoplasm. Affects cell viability at low temperatures. This is Cold shock protein CapA (capA) from Pseudomonas fragi.